A 569-amino-acid polypeptide reads, in one-letter code: Cationic amino acid transporter 9, chloroplastic (569 aa).

The transit peptide at 1-41 (MGGHEGFSNQRLSSATWFSHFRASALRSKSLPPPSSQTAVR) directs the protein to the chloroplast. 14 consecutive transmembrane segments (helical) span residues 53–73 (GLFD…VFVV), 81–101 (AGPG…LNAL), 113–135 (VVGG…LVFV), 155–175 (YAVA…LWMG), 181–201 (LGGL…LTLV), 215–235 (VMTA…AFEI), 250–270 (AVLT…AVAN), 284–304 (IGIM…CLVL), 333–353 (ILIS…GLYV), 406–428 (HILS…ALRL), 444–464 (WQEG…AGVF), 467–487 (FSAS…ASAV), 502–522 (FSCP…IFLF), and 528–548 (EAWI…ALYG).

The protein belongs to the amino acid-polyamine-organocation (APC) superfamily. Cationic amino acid transporter (CAT) (TC 2.A.3.3) family. As to expression, expressed in roots, stems, flowers, and leaves.

The protein resides in the plastid. Its subcellular location is the chloroplast membrane. Its function is as follows. Permease involved in the transport of the cationic amino acids. The polypeptide is Cationic amino acid transporter 9, chloroplastic (CAT9) (Arabidopsis thaliana (Mouse-ear cress)).